Reading from the N-terminus, the 107-residue chain is Small ribosomal subunit protein uS17 (107 aa).

The protein belongs to the universal ribosomal protein uS17 family. In terms of assembly, part of the 30S ribosomal subunit.

Its function is as follows. One of the primary rRNA binding proteins, it binds specifically to the 5'-end of 16S ribosomal RNA. The polypeptide is Small ribosomal subunit protein uS17 (Thermotoga petrophila (strain ATCC BAA-488 / DSM 13995 / JCM 10881 / RKU-1)).